The chain runs to 141 residues: Large ribosomal subunit protein uL11 (141 aa).

Belongs to the universal ribosomal protein uL11 family. As to quaternary structure, part of the ribosomal stalk of the 50S ribosomal subunit. Interacts with L10 and the large rRNA to form the base of the stalk. L10 forms an elongated spine to which L12 dimers bind in a sequential fashion forming a multimeric L10(L12)X complex. Post-translationally, one or more lysine residues are methylated.

Functionally, forms part of the ribosomal stalk which helps the ribosome interact with GTP-bound translation factors. This Prosthecochloris aestuarii (strain DSM 271 / SK 413) protein is Large ribosomal subunit protein uL11.